The following is a 964-amino-acid chain: Iron-responsive element-binding protein 2 (964 aa).

3 residues coordinate [4Fe-4S] cluster: Cys-513, Cys-579, and Cys-582.

It belongs to the aconitase/IPM isomerase family. Interacts with RBCK1 only in iron-rich conditions. Interacts (when associated with the 4Fe-4S) with FBXL5. Interacts with CIAO1 and CIAO2A. It depends on [4Fe-4S] cluster as a cofactor. Post-translationally, ubiquitinated and degraded by the proteasome in presence of high level of iron and oxygen. Ubiquitinated by a SCF complex containing FBXL5. Upon iron and oxygen depletion FBXL5 is degraded, preventing ubiquitination and allowing its RNA-binding activity.

The protein resides in the cytoplasm. Its function is as follows. RNA-binding protein that binds to iron-responsive elements (IRES), which are stem-loop structures found in the 5'-UTR of ferritin, and delta aminolevulinic acid synthase mRNAs, and in the 3'-UTR of transferrin receptor mRNA. Binding to the IRE element in ferritin results in the repression of its mRNA translation. Binding of the protein to the transferrin receptor mRNA inhibits the degradation of this otherwise rapidly degraded mRNA. This is Iron-responsive element-binding protein 2 (IREB2) from Sus scrofa (Pig).